We begin with the raw amino-acid sequence, 154 residues long: Myoglobin (154 aa).

In terms of domain architecture, Globin spans 2-148 (VLSEGEWQLV…FRKDIAAKYK (147 aa)). Phosphoserine is present on Ser-4. Residue His-65 coordinates nitrite. His-65 lines the O2 pocket. Phosphothreonine is present on Thr-68. His-94 serves as a coordination point for heme b.

Belongs to the globin family. In terms of assembly, monomeric.

The protein localises to the cytoplasm. It is found in the sarcoplasm. It catalyses the reaction Fe(III)-heme b-[protein] + nitric oxide + H2O = Fe(II)-heme b-[protein] + nitrite + 2 H(+). The catalysed reaction is H2O2 + AH2 = A + 2 H2O. Functionally, monomeric heme protein which primary function is to store oxygen and facilitate its diffusion within muscle tissues. Reversibly binds oxygen through a pentacoordinated heme iron and enables its timely and efficient release as needed during periods of heightened demand. Depending on the oxidative conditions of tissues and cells, and in addition to its ability to bind oxygen, it also has a nitrite reductase activity whereby it regulates the production of bioactive nitric oxide. Under stress conditions, like hypoxia and anoxia, it also protects cells against reactive oxygen species thanks to its pseudoperoxidase activity. The sequence is that of Myoglobin (MB) from Kogia breviceps (Pygmy sperm whale).